A 166-amino-acid chain; its full sequence is UPF0254 protein Maeo_0668 (166 aa).

This sequence belongs to the UPF0254 family.

This is UPF0254 protein Maeo_0668 from Methanococcus aeolicus (strain ATCC BAA-1280 / DSM 17508 / OCM 812 / Nankai-3).